The following is a 110-amino-acid chain: Movement protein TGB2 (110 aa).

Residues 1–10 lie on the Cytoplasmic side of the membrane; it reads MSGAHHLTPP. The chain crosses the membrane as a helical span at residues 11–34; sequence TDYGKPVLAASIGISLALLVYTAT. Topologically, residues 35–76 are lumenal; it reads RSTLPHVGDNLHALPHGGRYVDGTKSISYFSPSASKTRDPFP. The chain crosses the membrane as a helical span at residues 77-92; the sequence is FAFLLILTLSGLILLL. Residues 93-110 are Cytoplasmic-facing; it reads SRRRSNPHSCPSCGTPHA.

The protein belongs to the Tymovirales TGBp2 protein family.

It localises to the host endoplasmic reticulum membrane. Its function is as follows. Plays a role in viral cell-to-cell propagation, by facilitating genome transport to neighboring plant cells through plasmosdesmata,. This Plantago asiatica (P1AMV) protein is Movement protein TGB2.